The chain runs to 158 residues: Phosphopantetheine adenylyltransferase (158 aa).

T9 provides a ligand contact to substrate. ATP contacts are provided by residues 9–10 and H17; that span reads TF. Residues K41, L73, and R87 each coordinate substrate. Residues 88–90, E98, and 123–129 each bind ATP; these read GVR and WSYVSST.

This sequence belongs to the bacterial CoaD family. Homohexamer. Mg(2+) serves as cofactor.

It localises to the cytoplasm. The enzyme catalyses (R)-4'-phosphopantetheine + ATP + H(+) = 3'-dephospho-CoA + diphosphate. It functions in the pathway cofactor biosynthesis; coenzyme A biosynthesis; CoA from (R)-pantothenate: step 4/5. In terms of biological role, reversibly transfers an adenylyl group from ATP to 4'-phosphopantetheine, yielding dephospho-CoA (dPCoA) and pyrophosphate. In Histophilus somni (strain 2336) (Haemophilus somnus), this protein is Phosphopantetheine adenylyltransferase.